Reading from the N-terminus, the 102-residue chain is UPF0751 protein Dhaf_1351 (102 aa).

The protein belongs to the UPF0751 family.

This is UPF0751 protein Dhaf_1351 from Desulfitobacterium hafniense (strain DSM 10664 / DCB-2).